A 127-amino-acid chain; its full sequence is Nitrogenase-stabilizing/protective protein NifW (127 aa).

The protein belongs to the NifW family. As to quaternary structure, homotrimer; associates with NifD.

Functionally, may protect the nitrogenase Fe-Mo protein from oxidative damage. The protein is Nitrogenase-stabilizing/protective protein NifW of Rhizobium etli (strain ATCC 51251 / DSM 11541 / JCM 21823 / NBRC 15573 / CFN 42).